The chain runs to 298 residues: MHRSLKIFGTLTSIGMVIVLMQGALVTKTESGEGCGATWPLCFGEVIPTNPAIETIIEYSHRIVSGLLGAMVIILAIWAWRKLSHIRETKVMAILAVLFIIFQGLLGAGAVVFGQSHAILALHFGISAISLATVVLLTTLAFEDGKPNPPALIVKKGYKGYILAVFAYCYAVIYTGAYVKHTQATLACGDFPLCNGQWIPMLSGPVGAHFFHRVAGTLLLILLVVALIWTLRKYSHYRSLVWTHILCVILVLTQYATGISIVLTGNELFVAMMHALIVSILFTTLCYIVMILSRNKAV.

Over 1 to 6 (MHRSLK) the chain is Cytoplasmic. Residues 7-27 (IFGTLTSIGMVIVLMQGALVT) traverse the membrane as a helical segment. Residues 28–62 (KTESGEGCGATWPLCFGEVIPTNPAIETIIEYSHR) lie on the Extracellular side of the membrane. Cysteines 35 and 42 form a disulfide. Glu58 is a catalytic residue. His61 provides a ligand contact to heme o. The chain crosses the membrane as a helical span at residues 63-83 (IVSGLLGAMVIILAIWAWRKL). Residues 84–92 (SHIRETKVM) are Cytoplasmic-facing. A helical transmembrane segment spans residues 93 to 113 (AILAVLFIIFQGLLGAGAVVF). The Extracellular portion of the chain corresponds to 114–117 (GQSH). The chain crosses the membrane as a helical span at residues 118–138 (AILALHFGISAISLATVVLLT). Position 123 (His123) interacts with heme o. Residues 139–158 (TLAFEDGKPNPPALIVKKGY) are Cytoplasmic-facing. The chain crosses the membrane as a helical span at residues 159–179 (KGYILAVFAYCYAVIYTGAYV). Residues 180-209 (KHTQATLACGDFPLCNGQWIPMLSGPVGAH) lie on the Extracellular side of the membrane. Residues Cys188 and Cys194 are joined by a disulfide bond. A helical transmembrane segment spans residues 210–230 (FFHRVAGTLLLILLVVALIWT). His212 is a heme b binding site. Over 231-244 (LRKYSHYRSLVWTH) the chain is Cytoplasmic. Residues 245 to 265 (ILCVILVLTQYATGISIVLTG) traverse the membrane as a helical segment. Topologically, residues 266–271 (NELFVA) are extracellular. The helical transmembrane segment at 272 to 292 (MMHALIVSILFTTLCYIVMIL) threads the bilayer. Heme b is bound at residue His274. Topologically, residues 293-298 (SRNKAV) are cytoplasmic.

It belongs to the COX15/CtaA family. Type 1 subfamily. Interacts with CtaB. The cofactor is heme b.

It is found in the cell membrane. The catalysed reaction is Fe(II)-heme o + 2 A + H2O = Fe(II)-heme a + 2 AH2. It functions in the pathway porphyrin-containing compound metabolism; heme A biosynthesis; heme A from heme O: step 1/1. Its function is as follows. Catalyzes the conversion of heme O to heme A by two successive hydroxylations of the methyl group at C8. The first hydroxylation forms heme I, the second hydroxylation results in an unstable dihydroxymethyl group, which spontaneously dehydrates, resulting in the formyl group of heme A. This is Heme A synthase from Halalkalibacterium halodurans (strain ATCC BAA-125 / DSM 18197 / FERM 7344 / JCM 9153 / C-125) (Bacillus halodurans).